A 306-amino-acid chain; its full sequence is Manganese transport system membrane protein MntB (306 aa).

Topologically, residues 1 to 25 (MNQLVVAFPFWHWLVEPLQYEFLIR) are periplasmic. The helical transmembrane segment at 26–46 (AIWVSAFVGLVCAVLSCYITL) threads the bilayer. Residues 47-48 (KG) lie on the Cytoplasmic side of the membrane. The helical transmembrane segment at 49-69 (WSLMGDAISHAVVPGVVLAYA) threads the bilayer. The Periplasmic segment spans residues 70 to 71 (LN). The helical transmembrane segment at 72–92 (IPFAIGAFTFGFGATVAIGYV) threads the bilayer. At 93-101 (KSKTRLKED) the chain is on the cytoplasmic side. Residues 102 to 122 (AVIGIVFTGFFALGLVLVTKI) traverse the membrane as a helical segment. The Periplasmic portion of the chain corresponds to 123–141 (PSNVDLFHILFGNVLGISQ). Residues 142–162 (QDIIQTLIAGSITLIVILLRR) form a helical membrane-spanning segment. Residues 163 to 179 (KDLLLFCFDPNHAKAIG) are Cytoplasmic-facing. A helical transmembrane segment spans residues 180-200 (LRTQVMYYTLLSVLALTIVAA). The Periplasmic portion of the chain corresponds to 201-202 (LQ). Residues 203–223 (TAGIILVISMLVTPGSIGYLL) form a helical membrane-spanning segment. The Cytoplasmic segment spans residues 224 to 228 (SDRFD). Residues 229–249 (HMLWYSVVSSVLSCVLGTYLS) form a helical membrane-spanning segment. Residues 250–255 (YHFDVS) are Periplasmic-facing. Residues 256–276 (TGGMIVVILTTLFVIAMIGAP) form a helical membrane-spanning segment. Residues 277–306 (KYGILAQEWRKRSGPNPEDDENQTVVVDQV) are Cytoplasmic-facing.

Belongs to the ABC-3 integral membrane protein family.

The protein localises to the cell membrane. In terms of biological role, part of an ATP-driven transport system for manganese. The polypeptide is Manganese transport system membrane protein MntB (mntB) (Synechocystis sp. (strain ATCC 27184 / PCC 6803 / Kazusa)).